We begin with the raw amino-acid sequence, 169 residues long: Der GTPase-activating protein YihI (169 aa).

2 disordered regions span residues 1-99 (MKPS…QAEL) and 146-169 (SYDD…LRGN). Over residues 10-19 (SKGHAKARRK) the composition is skewed to basic residues. A compositionally biased stretch (basic and acidic residues) spans 20–30 (TREELDQEARD). Positions 31-40 (RKRQKKRRGH) are enriched in basic residues. The segment covering 49–58 (GNTTSGSKGQ) has biased composition (polar residues). The span at 147–159 (YDDDEEEEEDEKQ) shows a compositional bias: acidic residues. Over residues 160 to 169 (EDMMRLLRGN) the composition is skewed to basic and acidic residues.

It belongs to the YihI family. As to quaternary structure, interacts with Der.

Its function is as follows. A GTPase-activating protein (GAP) that modifies Der/EngA GTPase function. May play a role in ribosome biogenesis. This chain is Der GTPase-activating protein YihI, found in Escherichia coli O45:K1 (strain S88 / ExPEC).